The chain runs to 105 residues: DNA-directed RNA polymerase subunit omega (105 aa).

This sequence belongs to the RNA polymerase subunit omega family. In terms of assembly, the RNAP catalytic core consists of 2 alpha, 1 beta, 1 beta' and 1 omega subunit. When a sigma factor is associated with the core the holoenzyme is formed, which can initiate transcription.

It carries out the reaction RNA(n) + a ribonucleoside 5'-triphosphate = RNA(n+1) + diphosphate. Promotes RNA polymerase assembly. Latches the N- and C-terminal regions of the beta' subunit thereby facilitating its interaction with the beta and alpha subunits. The sequence is that of DNA-directed RNA polymerase subunit omega from Streptococcus mutans serotype c (strain ATCC 700610 / UA159).